A 717-amino-acid polypeptide reads, in one-letter code: Patatin-like phospholipase domain-containing protein AO090003000839 (717 aa).

Residues 87 to 107 (WPFLFIVFGWITVLGFAYALT) form a helical membrane-spanning segment. Residues 277–468 (LCLSGGATFA…RTDIPIRALN (192 aa)) enclose the PNPLA domain. The short motif at 308 to 312 (GTSGG) is the GXSXG element. The active-site Nucleophile is the S310. The active-site Proton acceptor is D455. Residues 620 to 696 (VSPAQSRRKR…STGNIFQEMR (77 aa)) are disordered. Residues 639–658 (MVERLDHNLPDRQPDNKEDL) show a composition bias toward basic and acidic residues. The span at 660–673 (DSSGIDSNVSSRDS) shows a compositional bias: low complexity.

Belongs to the PLPL family.

The protein resides in the membrane. In terms of biological role, probable lipid hydrolase. In Aspergillus oryzae (strain ATCC 42149 / RIB 40) (Yellow koji mold), this protein is Patatin-like phospholipase domain-containing protein AO090003000839.